The following is a 232-amino-acid chain: MSLFEWVFGKNVTPQERLKKNQRALERTQRELEREKRKLELQDKKLVSEIKKSAKNGQVAAAKVQAKDLVRTRNYIQKFDNMKAQLQAISLRIQAVRSSDQMTRSMSEATGLLAGMNRTMNLPQLQRISMEFEKQSDLMGQRQEFMDEAIDNVMGDEVDEDEEADEIVNKVLDEIGVDLNSQLQSTPQNLVSNAPIAETAMGIPEPIGAGSEFHGNPDDDLQARLNTLKKQT.

The stretch at 14–97 (PQERLKKNQR…AISLRIQAVR (84 aa)) forms a coiled coil. Positions 183–232 (LQSTPQNLVSNAPIAETAMGIPEPIGAGSEFHGNPDDDLQARLNTLKKQT) are interaction with VPS4. The interval 203-232 (IPEPIGAGSEFHGNPDDDLQARLNTLKKQT) is disordered. An MIT-interacting motif motif is present at residues 219–229 (DDLQARLNTLK).

Belongs to the SNF7 family. As to quaternary structure, core component of the ESCRT-III complex (endosomal sorting required for transport complex III). ESCRT-III appears to be sequentially assembled as a flat lattice on the endosome membrane and forms a transient 450 kDa complex that contains DID4, oligomerized SNF7, VPS20 and VPS24. SNF7 oligomerization into a membrane-associated filament is nucleated by association of SNF7 with VPS20; the process is terminated through association of VPS24, possibly by capping the SNF7 filament. VPS24 subsequently associates with DID4/VPS2.

The protein localises to the cytoplasm. Its subcellular location is the endosome membrane. In terms of biological role, required for the sorting and concentration of proteins resulting in the entry of these proteins into the invaginating vesicles of the multivesicular body (MVB). Acts a component of the ESCRT-III complex, which appears to be critical for late steps in MVB sorting, such as membrane invagination and final cargo sorting and recruitment of late-acting components of the sorting machinery. The MVB pathway requires the sequential function of ESCRT-O, -I,-II and -III complex assemblies. Can directly stimulate VPS4 ATPase activity. The DID4/VPS2-VPS24 subcomplex is required for the VPS4-dependent dissociation of ESCRT-III. This chain is DOA4-independent degradation protein 4 (DID4), found in Saccharomyces cerevisiae (strain ATCC 204508 / S288c) (Baker's yeast).